The primary structure comprises 223 residues: Phosphoribosylformylglycinamidine synthase subunit PurQ (223 aa).

One can recognise a Glutamine amidotransferase type-1 domain in the interval 3–223 (SAVVQLPGLN…FASALDVIAA (221 aa)). Catalysis depends on Cys-86, which acts as the Nucleophile. Active-site residues include His-196 and Glu-198.

Part of the FGAM synthase complex composed of 1 PurL, 1 PurQ and 2 PurS subunits.

The protein resides in the cytoplasm. It carries out the reaction N(2)-formyl-N(1)-(5-phospho-beta-D-ribosyl)glycinamide + L-glutamine + ATP + H2O = 2-formamido-N(1)-(5-O-phospho-beta-D-ribosyl)acetamidine + L-glutamate + ADP + phosphate + H(+). The enzyme catalyses L-glutamine + H2O = L-glutamate + NH4(+). The protein operates within purine metabolism; IMP biosynthesis via de novo pathway; 5-amino-1-(5-phospho-D-ribosyl)imidazole from N(2)-formyl-N(1)-(5-phospho-D-ribosyl)glycinamide: step 1/2. Functionally, part of the phosphoribosylformylglycinamidine synthase complex involved in the purines biosynthetic pathway. Catalyzes the ATP-dependent conversion of formylglycinamide ribonucleotide (FGAR) and glutamine to yield formylglycinamidine ribonucleotide (FGAM) and glutamate. The FGAM synthase complex is composed of three subunits. PurQ produces an ammonia molecule by converting glutamine to glutamate. PurL transfers the ammonia molecule to FGAR to form FGAM in an ATP-dependent manner. PurS interacts with PurQ and PurL and is thought to assist in the transfer of the ammonia molecule from PurQ to PurL. The sequence is that of Phosphoribosylformylglycinamidine synthase subunit PurQ from Rhizobium johnstonii (strain DSM 114642 / LMG 32736 / 3841) (Rhizobium leguminosarum bv. viciae).